Here is a 332-residue protein sequence, read N- to C-terminus: Holliday junction branch migration complex subunit RuvB (332 aa).

A large ATPase domain (RuvB-L) region spans residues 1-181 (MSRILDNEIM…FGITGHMEYY (181 aa)). ATP contacts are provided by residues leucine 20, arginine 21, glycine 62, lysine 65, threonine 66, threonine 67, 128–130 (EDF), arginine 171, tyrosine 181, and arginine 218. Threonine 66 contributes to the Mg(2+) binding site. Residues 182-252 (AHADLTEIVE…ITDKALTMLD (71 aa)) form a small ATPAse domain (RuvB-S) region. A head domain (RuvB-H) region spans residues 255-332 (HEGLDYVDQK…EHLGYEYSEK (78 aa)). DNA contacts are provided by arginine 291, arginine 310, arginine 312, and arginine 315.

The protein belongs to the RuvB family. In terms of assembly, homohexamer. Forms an RuvA(8)-RuvB(12)-Holliday junction (HJ) complex. HJ DNA is sandwiched between 2 RuvA tetramers; dsDNA enters through RuvA and exits via RuvB. An RuvB hexamer assembles on each DNA strand where it exits the tetramer. Each RuvB hexamer is contacted by two RuvA subunits (via domain III) on 2 adjacent RuvB subunits; this complex drives branch migration. In the full resolvosome a probable DNA-RuvA(4)-RuvB(12)-RuvC(2) complex forms which resolves the HJ.

Its subcellular location is the cytoplasm. The catalysed reaction is ATP + H2O = ADP + phosphate + H(+). Functionally, the RuvA-RuvB-RuvC complex processes Holliday junction (HJ) DNA during genetic recombination and DNA repair, while the RuvA-RuvB complex plays an important role in the rescue of blocked DNA replication forks via replication fork reversal (RFR). RuvA specifically binds to HJ cruciform DNA, conferring on it an open structure. The RuvB hexamer acts as an ATP-dependent pump, pulling dsDNA into and through the RuvAB complex. RuvB forms 2 homohexamers on either side of HJ DNA bound by 1 or 2 RuvA tetramers; 4 subunits per hexamer contact DNA at a time. Coordinated motions by a converter formed by DNA-disengaged RuvB subunits stimulates ATP hydrolysis and nucleotide exchange. Immobilization of the converter enables RuvB to convert the ATP-contained energy into a lever motion, pulling 2 nucleotides of DNA out of the RuvA tetramer per ATP hydrolyzed, thus driving DNA branch migration. The RuvB motors rotate together with the DNA substrate, which together with the progressing nucleotide cycle form the mechanistic basis for DNA recombination by continuous HJ branch migration. Branch migration allows RuvC to scan DNA until it finds its consensus sequence, where it cleaves and resolves cruciform DNA. The protein is Holliday junction branch migration complex subunit RuvB of Streptococcus pneumoniae serotype 2 (strain D39 / NCTC 7466).